We begin with the raw amino-acid sequence, 471 residues long: Trehalose-binding lipoprotein LpqY (471 aa).

Positions 1–28 (MDGRQVVRARRWCATAAVALMTASTVAA) are cleaved as a signal peptide. Cys29 is lipidated: N-palmitoyl cysteine. Cys29 carries the S-diacylglycerol cysteine lipid modification. The alpha,alpha-trehalose site is built by Asn45, Glu46, Gln79, Asp100, Asn154, Tyr198, Trp279, Tyr281, Gly354, and Arg424. The cysteines at positions 57 and 375 are disulfide-linked.

It belongs to the bacterial solute-binding protein 1 family. In terms of assembly, monomer. The complex is composed of two ATP-binding proteins (SugC), two transmembrane proteins (SugA and SugB) and a solute-binding protein (LpqY).

Its subcellular location is the cell inner membrane. Functionally, part of the ABC transporter complex LpqY-SugA-SugB-SugC, which is highly specific for uptake of trehalose. Involved in the recycling of extracellular trehalose released from trehalose-containing molecules synthesized by M.thermoresistibile. Trehalose uptake is essential for virulence. Binds deuterated trehalose with similar high affinity to trehalose, trehalose analogs including galactotrehalose, 4-azido-4-deoxy-trehalose, 6-azido-6-deoxy-trehalose, 3-azido-3-deoxy-trehalose and mannotrehalose in the order of decreasing affinity, respectively, and 2-azido-2-deoxy-trehalose and kojibiose (alpha1,2-glycosidic bond) with very low affinity. Does not recognize single glucose, 6-amino-6-deoxy-trehalose, trehalose-6-phosphate, nigerose (alpha1,3-glycosidic bond), maltose (alpha1,4-glycosidic bond), isomaltose (alpha1,6-glycosidic bond) or glycerophosphocholine. Decreased recognition of alpha,beta-trehalose and almost no recognition of beta,beta-trehalose. Substrate specificity indicates a strict requirement for an alpha1,1-linked disaccharide. This chain is Trehalose-binding lipoprotein LpqY, found in Mycolicibacterium thermoresistibile (strain ATCC 19527 / DSM 44167 / CIP 105390 / JCM 6362 / NCTC 10409 / 316) (Mycobacterium thermoresistibile).